A 175-amino-acid polypeptide reads, in one-letter code: NAD(P)H-quinone oxidoreductase subunit I, chloroplastic (175 aa).

2 4Fe-4S ferredoxin-type domains span residues 55–84 and 95–124; these read GRIH…VNWE and QTYS…MTEE. [4Fe-4S] cluster contacts are provided by Cys64, Cys67, Cys70, Cys74, Cys104, Cys107, Cys110, and Cys114.

This sequence belongs to the complex I 23 kDa subunit family. As to quaternary structure, NDH is composed of at least 16 different subunits, 5 of which are encoded in the nucleus. [4Fe-4S] cluster is required as a cofactor.

It localises to the plastid. It is found in the chloroplast thylakoid membrane. It carries out the reaction a plastoquinone + NADH + (n+1) H(+)(in) = a plastoquinol + NAD(+) + n H(+)(out). The catalysed reaction is a plastoquinone + NADPH + (n+1) H(+)(in) = a plastoquinol + NADP(+) + n H(+)(out). NDH shuttles electrons from NAD(P)H:plastoquinone, via FMN and iron-sulfur (Fe-S) centers, to quinones in the photosynthetic chain and possibly in a chloroplast respiratory chain. The immediate electron acceptor for the enzyme in this species is believed to be plastoquinone. Couples the redox reaction to proton translocation, and thus conserves the redox energy in a proton gradient. The chain is NAD(P)H-quinone oxidoreductase subunit I, chloroplastic from Chlorokybus atmophyticus (Soil alga).